Consider the following 419-residue polypeptide: LWamide neuropeptides (419 aa).

The N-terminal stretch at methionine 1–alanine 27 is a signal peptide. Residues alanine 27–asparagine 48 form a disordered region. The propeptide occupies lysine 28–glutamine 104. At tryptophan 110 the chain carries Tryptophan amide. The propeptide occupies glutamate 113–alanine 140. Over residues arginine 120–glutamine 132 the composition is skewed to basic and acidic residues. A disordered region spans residues arginine 120–aspartate 332. A Tryptophan amide modification is found at tryptophan 146. A propeptide spanning residues aspartate 149 to alanine 150 is cleaved from the precursor. Residue tryptophan 156 is modified to Tryptophan amide. The propeptide occupies aspartate 159–alanine 160. Tryptophan 166 carries the post-translational modification Tryptophan amide. Residues aspartate 169–alanine 170 constitute a propeptide that is removed on maturation. The residue at position 176 (tryptophan 176) is a Tryptophan amide. Positions aspartate 179 to alanine 180 are excised as a propeptide. The residue at position 186 (tryptophan 186) is a Tryptophan amide. A propeptide spanning residues aspartate 189–alanine 190 is cleaved from the precursor. Tryptophan 196 carries the post-translational modification Tryptophan amide. A propeptide spanning residues aspartate 199–alanine 200 is cleaved from the precursor. Tryptophan 206 carries the post-translational modification Tryptophan amide. Residues aspartate 209–alanine 210 constitute a propeptide that is removed on maturation. A Tryptophan amide modification is found at tryptophan 216. The propeptide at glycine 218–alanine 220 is seems to have a sequencing error or a mutation in position 218; Gly instead of Arg. Tryptophan 226 is subject to Tryptophan amide. Residues aspartate 229–alanine 230 constitute a propeptide that is removed on maturation. Tryptophan 236 carries the tryptophan amide modification. The propeptide occupies aspartate 239–alanine 240. Tryptophan 246 bears the Tryptophan amide mark. A propeptide spanning residues aspartate 249–alanine 250 is cleaved from the precursor. Tryptophan 256 bears the Tryptophan amide mark. Positions aspartate 259–alanine 260 are excised as a propeptide. A Tryptophan amide modification is found at tryptophan 266. Positions aspartate 269–alanine 270 are excised as a propeptide. A Tryptophan amide modification is found at tryptophan 276. The propeptide occupies aspartate 279–threonine 280. Tryptophan 286 carries the tryptophan amide modification. The propeptide occupies aspartate 289–alanine 290. Position 296 is a tryptophan amide (tryptophan 296). 2 consecutive propeptides follow at residues aspartate 299 to alanine 300 and aspartate 309 to alanine 320. Tryptophan 326 bears the Tryptophan amide mark. Positions glutamine 329–phenylalanine 419 are excised as a propeptide.

It belongs to the LWamide neuropeptide family. In planula larvae, expressed in a narrow ring of ectodermal neurosensory cells around the widest circumference at the anterior of the larvae. In primary polyps, expression is confined to endodermal cells of the hypostome. In mature polyps, expression is strong in the epidermis from the tentacle level to the base of the polyp and weak in the gastrodermal cells in the apical hypostome.

The protein resides in the secreted. Its function is as follows. LWamide peptides may be involved in induction of metamorphosis. The sequence is that of LWamide neuropeptides from Hydractinia echinata (Snail fur).